Consider the following 264-residue polypeptide: MKQYLELMQKVLDEGTQKNDRTGTGTLSIFGHQMRFNLQEGFPLVTTKRCHLRSIIHELLWFLQGDTNIAYLHENNVTIWDEWADENGDLGPVYGKQWRAWPTPDGRHIDQIATVLSQLKNDPDSRRIIVSAWNVGELDKMALAPCHAFFQFYVADGKLSCQLYQRSCDVFLGLPFNIASYALLVHMMAQQCDLDVGDFVWTGGDTHLYSNHMEQTHLQLSREPRALPKLVIKRKPDSLFDYRFDDFEIEGYDPHPGIKAPVAI.

Residue Arg-21 coordinates dUMP. His-51 lines the (6R)-5,10-methylene-5,6,7,8-tetrahydrofolate pocket. 126–127 (RR) lines the dUMP pocket. Residue Cys-146 is the Nucleophile of the active site. DUMP is bound by residues 166 to 169 (RSCD), Asn-177, and 207 to 209 (HLY). A (6R)-5,10-methylene-5,6,7,8-tetrahydrofolate-binding site is contributed by Asp-169. Residue Ala-263 participates in (6R)-5,10-methylene-5,6,7,8-tetrahydrofolate binding.

Belongs to the thymidylate synthase family. Bacterial-type ThyA subfamily. Homodimer.

The protein resides in the cytoplasm. It catalyses the reaction dUMP + (6R)-5,10-methylene-5,6,7,8-tetrahydrofolate = 7,8-dihydrofolate + dTMP. The protein operates within pyrimidine metabolism; dTTP biosynthesis. Catalyzes the reductive methylation of 2'-deoxyuridine-5'-monophosphate (dUMP) to 2'-deoxythymidine-5'-monophosphate (dTMP) while utilizing 5,10-methylenetetrahydrofolate (mTHF) as the methyl donor and reductant in the reaction, yielding dihydrofolate (DHF) as a by-product. This enzymatic reaction provides an intracellular de novo source of dTMP, an essential precursor for DNA biosynthesis. The sequence is that of Thymidylate synthase from Salmonella typhimurium (strain LT2 / SGSC1412 / ATCC 700720).